Here is a 406-residue protein sequence, read N- to C-terminus: Proteasome-activating nucleotidase 1 (406 aa).

Residues tyrosine 13 to serine 72 adopt a coiled-coil conformation. ATP contacts are provided by residues glycine 194–methionine 199 and histidine 333. Positions alanine 404–alanine 406 are docks into pockets in the proteasome alpha-ring to cause gate opening.

It belongs to the AAA ATPase family. In terms of assembly, homododecamer, in a proposed two stacked hexameric ring configuration, but may also form homohexamer. The hexameric complex has likely a two-ring architecture resembling a top hat that caps the 20S proteasome core at one or both ends. Upon ATP-binding, the C-terminus of PAN probably interacts with the alpha-rings of the proteasome core by binding to the intersubunit pockets. Interacts with SAMP1-MoaE conjugate in vitro, but does not bind to SAMP1 or MoaE alone. Interacts with NcsA.

The protein localises to the cytoplasm. ATPase activity is inhibited by EDTA in vitro. ATPase which is responsible for recognizing, binding, unfolding and translocation of substrate proteins into the archaeal 20S proteasome core particle. Is essential for opening the gate of the 20S proteasome via an interaction with its C-terminus, thereby allowing substrate entry and access to the site of proteolysis. Thus, the C-terminus of the proteasomal ATPase functions like a 'key in a lock' to induce gate opening and therefore regulate proteolysis. Unfolding activity requires energy from ATP hydrolysis, whereas ATP binding alone promotes ATPase-20S proteasome association which triggers gate opening, and supports translocation of unfolded substrates. Is also able to cleave other nucleoside triphosphates including GTP and TTP, but the rate of hydrolysis is 4- to 5-fold slower than for ATP. This Haloferax volcanii (strain ATCC 29605 / DSM 3757 / JCM 8879 / NBRC 14742 / NCIMB 2012 / VKM B-1768 / DS2) (Halobacterium volcanii) protein is Proteasome-activating nucleotidase 1.